Here is a 99-residue protein sequence, read N- to C-terminus: DNA-directed RNA polymerase subunit Rpo11 (99 aa).

Belongs to the archaeal Rpo11/eukaryotic RPB11/RPC19 RNA polymerase subunit family. In terms of assembly, part of the RNA polymerase complex. Forms an Rpo3-Rpo10-Rpo11-Rpo12 complex upon coexpression.

The protein resides in the cytoplasm. The enzyme catalyses RNA(n) + a ribonucleoside 5'-triphosphate = RNA(n+1) + diphosphate. DNA-dependent RNA polymerase (RNAP) catalyzes the transcription of DNA into RNA using the four ribonucleoside triphosphates as substrates. The protein is DNA-directed RNA polymerase subunit Rpo11 of Methanocaldococcus jannaschii (strain ATCC 43067 / DSM 2661 / JAL-1 / JCM 10045 / NBRC 100440) (Methanococcus jannaschii).